Reading from the N-terminus, the 110-residue chain is Large ribosomal subunit protein uL22 (110 aa).

Belongs to the universal ribosomal protein uL22 family. As to quaternary structure, part of the 50S ribosomal subunit.

Its function is as follows. This protein binds specifically to 23S rRNA; its binding is stimulated by other ribosomal proteins, e.g. L4, L17, and L20. It is important during the early stages of 50S assembly. It makes multiple contacts with different domains of the 23S rRNA in the assembled 50S subunit and ribosome. The globular domain of the protein is located near the polypeptide exit tunnel on the outside of the subunit, while an extended beta-hairpin is found that lines the wall of the exit tunnel in the center of the 70S ribosome. The polypeptide is Large ribosomal subunit protein uL22 (Aliivibrio fischeri (strain MJ11) (Vibrio fischeri)).